The chain runs to 263 residues: Large ribosomal subunit protein uL10m (263 aa).

The transit peptide at 1-29 (MPFSVEVEVFFLLVEDKLGWLPTLQPVRH) directs the protein to the mitochondrion. Residues 241-263 (QHEGDCATSTEGKPHPPDPAPDS) form a disordered region.

The protein belongs to the universal ribosomal protein uL10 family. As to quaternary structure, component of the mitochondrial ribosome large subunit (39S) which comprises a 16S rRNA and about 50 distinct proteins.

It is found in the mitochondrion. This chain is Large ribosomal subunit protein uL10m (Mrpl10), found in Rattus norvegicus (Rat).